A 449-amino-acid chain; its full sequence is tRNA-2-methylthio-N(6)-dimethylallyladenosine synthase (449 aa).

One can recognise an MTTase N-terminal domain in the interval 7–124 (DAFYIHTFGC…LPLLIKQVQQ (118 aa)). Residues Cys16, Cys52, Cys87, Cys163, Cys167, and Cys170 each contribute to the [4Fe-4S] cluster site. A Radical SAM core domain is found at 149–379 (RSSSMSAFVP…IECQNRISAS (231 aa)). Residues 382–445 (SQAVGSVVEV…SATLLGEPLI (64 aa)) enclose the TRAM domain.

Belongs to the methylthiotransferase family. MiaB subfamily. In terms of assembly, monomer. The cofactor is [4Fe-4S] cluster.

Its subcellular location is the cytoplasm. It carries out the reaction N(6)-dimethylallyladenosine(37) in tRNA + (sulfur carrier)-SH + AH2 + 2 S-adenosyl-L-methionine = 2-methylsulfanyl-N(6)-dimethylallyladenosine(37) in tRNA + (sulfur carrier)-H + 5'-deoxyadenosine + L-methionine + A + S-adenosyl-L-homocysteine + 2 H(+). Its function is as follows. Catalyzes the methylthiolation of N6-(dimethylallyl)adenosine (i(6)A), leading to the formation of 2-methylthio-N6-(dimethylallyl)adenosine (ms(2)i(6)A) at position 37 in tRNAs that read codons beginning with uridine. In Chlorobium chlorochromatii (strain CaD3), this protein is tRNA-2-methylthio-N(6)-dimethylallyladenosine synthase.